Here is a 198-residue protein sequence, read N- to C-terminus: Holliday junction resolvase RecU (198 aa).

The interval 1-22 (MVNYPHKLSSQKRQTSLSQPKN) is disordered. The span at 11–22 (QKRQTSLSQPKN) shows a compositional bias: polar residues. 4 residues coordinate Mg(2+): Thr-81, Asp-83, Glu-96, and Gln-115.

The protein belongs to the RecU family. Mg(2+) serves as cofactor.

It is found in the cytoplasm. The catalysed reaction is Endonucleolytic cleavage at a junction such as a reciprocal single-stranded crossover between two homologous DNA duplexes (Holliday junction).. Functionally, endonuclease that resolves Holliday junction intermediates in genetic recombination. Cleaves mobile four-strand junctions by introducing symmetrical nicks in paired strands. Promotes annealing of linear ssDNA with homologous dsDNA. Required for DNA repair, homologous recombination and chromosome segregation. In Streptococcus pneumoniae (strain Hungary19A-6), this protein is Holliday junction resolvase RecU.